The sequence spans 144 residues: 3-hydroxyacyl-[acyl-carrier-protein] dehydratase FabZ (144 aa).

Residue histidine 51 is part of the active site.

The protein belongs to the thioester dehydratase family. FabZ subfamily.

It is found in the cytoplasm. The catalysed reaction is a (3R)-hydroxyacyl-[ACP] = a (2E)-enoyl-[ACP] + H2O. Involved in unsaturated fatty acids biosynthesis. Catalyzes the dehydration of short chain beta-hydroxyacyl-ACPs and long chain saturated and unsaturated beta-hydroxyacyl-ACPs. This chain is 3-hydroxyacyl-[acyl-carrier-protein] dehydratase FabZ, found in Lactococcus lactis subsp. cremoris (strain MG1363).